Here is a 154-residue protein sequence, read N- to C-terminus: Ribosome maturation factor RimP (154 aa).

The protein belongs to the RimP family.

Its subcellular location is the cytoplasm. In terms of biological role, required for maturation of 30S ribosomal subunits. This is Ribosome maturation factor RimP from Flavobacterium psychrophilum (strain ATCC 49511 / DSM 21280 / CIP 103535 / JIP02/86).